The chain runs to 947 residues: Regulator of spindle assembly protein 2 (947 aa).

Disordered regions lie at residues 20 to 148 and 173 to 211; these read EKPA…LSEQ and SPHE…LKPR. Basic and acidic residues-rich tracts occupy residues 30–50 and 62–84; these read PKYR…EGEK and TRED…DLRI. Composition is skewed to polar residues over residues 90–102 and 179–188; these read SATP…SDQY and QQTIQESSEQ. Residues 276 to 320 adopt a coiled-coil conformation; that stretch reads IIAEEAKKRRNEAEAVRKLIEVETQNAKKRAVIQELKDRIDKLTQ. 4 disordered regions span residues 407–453, 575–594, 600–662, and 681–705; these read KINP…RRIG, ERES…LEIP, SVTT…GLII, and EQSL…FLLD. A compositionally biased stretch (low complexity) spans 411–422; it reads SSQLNQQSSSDA. Residues 430-449 show a composition bias toward polar residues; sequence EASTQMTSRLAESAMTQTSP. Positions 563–591 form a coiled coil; the sequence is AGLSHYLEQVKKERESMEAQESESESMEL. Acidic residues predominate over residues 580 to 590; it reads EAQESESESME. The span at 645–657 shows a compositional bias: basic and acidic residues; that stretch reads FEHEIEEHKEPEK.

Interacts with phosphatase regulatory subunit rsa-1 and tpxl-1. May interact with spd-5. May interact with sys-1.

The protein resides in the cytoplasm. The protein localises to the cytoskeleton. It localises to the microtubule organizing center. It is found in the centrosome. Recruits rsa-1 and, thereby, phosphatase let-92/paa-1 complex to the centrosomes. Recruits sys-1/beta-catenin to mitotic centrosomes during the first embryonic cell divisions. In Caenorhabditis elegans, this protein is Regulator of spindle assembly protein 2.